Reading from the N-terminus, the 48-residue chain is Sulfide dehydrogenase [flavocytochrome c] flavoprotein chain (48 aa).

An FAD-binding site is contributed by 40–46; it reads VTCPFSN.

Dimer of one cytochrome and one flavoprotein.

It localises to the periplasm. The enzyme catalyses hydrogen sulfide + 2 Fe(III)-[cytochrome c] = sulfur + 2 Fe(II)-[cytochrome c] + H(+). This Chlorobaculum thiosulfatiphilum (Chlorobium limicola f.sp. thiosulfatophilum) protein is Sulfide dehydrogenase [flavocytochrome c] flavoprotein chain.